We begin with the raw amino-acid sequence, 59 residues long: MFAGLPSLSHEQQQKAVERIQELMSQGMSSGEAIAQVAGELRANHTGERIVARFEDEDE.

It belongs to the UPF0181 family.

This is UPF0181 protein YoaH from Salmonella arizonae (strain ATCC BAA-731 / CDC346-86 / RSK2980).